A 211-amino-acid chain; its full sequence is Arginine exporter protein ArgO (211 aa).

6 helical membrane passes run 1-21 (MLSY…PLGP), 37-57 (LMIA…GIFG), 68-88 (LLAL…FGAL), 111-131 (IIAT…DTFV), 147-167 (WFAL…ALLA), and 186-206 (LVGL…IHHI).

It belongs to the LysE/ArgO transporter (TC 2.A.75) family.

The protein resides in the cell inner membrane. It carries out the reaction L-arginine(in) = L-arginine(out). In terms of biological role, involved in the export of arginine. Important to control the intracellular level of arginine and the correct balance between arginine and lysine. This is Arginine exporter protein ArgO from Enterobacter sp. (strain 638).